The sequence spans 747 residues: DNA ligase (747 aa).

NAD(+)-binding positions include aspartate 113–aspartate 117, serine 161–isoleucine 162, and glutamate 190. Catalysis depends on lysine 192, which acts as the N6-AMP-lysine intermediate. 4 residues coordinate NAD(+): arginine 213, glutamate 249, lysine 364, and lysine 388. 4 residues coordinate Zn(2+): cysteine 479, cysteine 482, cysteine 495, and cysteine 501. A BRCT domain is found at threonine 660–proline 747.

It belongs to the NAD-dependent DNA ligase family. LigA subfamily. It depends on Mg(2+) as a cofactor. Mn(2+) serves as cofactor.

It catalyses the reaction NAD(+) + (deoxyribonucleotide)n-3'-hydroxyl + 5'-phospho-(deoxyribonucleotide)m = (deoxyribonucleotide)n+m + AMP + beta-nicotinamide D-nucleotide.. Its function is as follows. DNA ligase that catalyzes the formation of phosphodiester linkages between 5'-phosphoryl and 3'-hydroxyl groups in double-stranded DNA using NAD as a coenzyme and as the energy source for the reaction. It is essential for DNA replication and repair of damaged DNA. The protein is DNA ligase of Haloquadratum walsbyi (strain DSM 16790 / HBSQ001).